The chain runs to 196 residues: CASP-like protein 1D1 (196 aa).

A compositionally biased stretch (basic and acidic residues) spans 1–18 (MASTDKPDRESIKSEEAP). Residues 1–22 (MASTDKPDRESIKSEEAPAAHP) form a disordered region. The Cytoplasmic portion of the chain corresponds to 1-29 (MASTDKPDRESIKSEEAPAAHPRRSNYSS). Residues 30–50 (VHVALRFLLFAASVTAVVVMV) traverse the membrane as a helical segment. Topologically, residues 51 to 84 (TAKQTKIVPVPGLPISVPLEAKFSDSPAFLYFIS) are extracellular. Residues 85 to 105 (ALSVAGLYGILTTLAAISIVL) traverse the membrane as a helical segment. Over 106–112 (KPAYATR) the chain is Cytoplasmic. A helical membrane pass occupies residues 113–133 (FLLHFALLDVLMLGIVASATG). Residues 134–167 (AAGGVAYVGLKGNSHVRWGKVCNVYDKFCQHVGS) are Extracellular-facing. The helical transmembrane segment at 168 to 188 (SIAVALFASVLLVLLTMLSVF) threads the bilayer. Residues 189 to 196 (SIYRKIPK) are Cytoplasmic-facing.

It belongs to the Casparian strip membrane proteins (CASP) family. As to quaternary structure, homodimer and heterodimers.

Its subcellular location is the cell membrane. In Populus trichocarpa (Western balsam poplar), this protein is CASP-like protein 1D1.